A 98-amino-acid polypeptide reads, in one-letter code: MMSINLNLIMAFSLALAGVLIYRTHLMSTLLCLEGMMLSLFILMALLISHFHMFSVSMAPLVLLVFSACEAGVGLALLVKTSSDYGNDYVQNLNLLQW.

3 helical membrane passes run 1-21, 28-48, and 59-79; these read MMSINLNLIMAFSLALAGVLI, STLLCLEGMMLSLFILMALLI, and APLVLLVFSACEAGVGLALLV.

It belongs to the complex I subunit 4L family. In terms of assembly, core subunit of respiratory chain NADH dehydrogenase (Complex I) which is composed of 45 different subunits.

It is found in the mitochondrion inner membrane. The enzyme catalyses a ubiquinone + NADH + 5 H(+)(in) = a ubiquinol + NAD(+) + 4 H(+)(out). Functionally, core subunit of the mitochondrial membrane respiratory chain NADH dehydrogenase (Complex I) which catalyzes electron transfer from NADH through the respiratory chain, using ubiquinone as an electron acceptor. Part of the enzyme membrane arm which is embedded in the lipid bilayer and involved in proton translocation. This chain is NADH-ubiquinone oxidoreductase chain 4L (MT-ND4L), found in Pseudocheirus peregrinus (Common ring-tailed possum).